The chain runs to 484 residues: Calcium-dependent protein kinase 26 (484 aa).

In terms of domain architecture, Protein kinase spans 24-282; that stretch reads YSLGHKLGQG…AHQVLRHPWI (259 aa). Residues 30–38 and Lys-53 each bind ATP; that span reads LGQGQFGTT. The active-site Proton acceptor is Asp-148. Ser-188 is modified (phosphoserine). An autoinhibitory domain region spans residues 288–318; that stretch reads APDRALDPAVLSRLKQFSAMNKLKQMALRVI. 4 consecutive EF-hand domains span residues 325-360, 361-396, 397-432, and 436-466; these read EEIA…YGST, LKDT…LNKL, EREE…QGMS, and LEDV…GIVG. Ca(2+) contacts are provided by Asp-338, Asp-340, Ser-342, Glu-349, Asp-374, Asp-376, Ser-378, Thr-380, Glu-385, Asp-410, Asp-412, Ser-414, Tyr-416, Glu-421, Asp-444, Asp-446, Asp-448, Arg-450, and Glu-455.

This sequence belongs to the protein kinase superfamily. Ser/Thr protein kinase family. CDPK subfamily.

It carries out the reaction L-seryl-[protein] + ATP = O-phospho-L-seryl-[protein] + ADP + H(+). The catalysed reaction is L-threonyl-[protein] + ATP = O-phospho-L-threonyl-[protein] + ADP + H(+). Activated by calcium. Autophosphorylation may play an important role in the regulation of the kinase activity. Its function is as follows. May play a role in signal transduction pathways that involve calcium as a second messenger. This Arabidopsis thaliana (Mouse-ear cress) protein is Calcium-dependent protein kinase 26 (CPK26).